Consider the following 366-residue polypeptide: Molybdopterin synthase catalytic subunit (366 aa).

Substrate is bound by residues 101–102 (HR), K117, and 124–126 (KKE).

This sequence belongs to the MoaE family. MOCS2B subfamily. As to quaternary structure, heterotetramer; composed of 2 small (Mocs2A) and 2 large (Mocs2B) subunits.

It localises to the cytoplasm. The catalysed reaction is 2 [molybdopterin-synthase sulfur-carrier protein]-C-terminal-Gly-aminoethanethioate + cyclic pyranopterin phosphate + H2O = molybdopterin + 2 [molybdopterin-synthase sulfur-carrier protein]-C-terminal Gly-Gly + 2 H(+). It participates in cofactor biosynthesis; molybdopterin biosynthesis. Its function is as follows. Catalytic subunit of the molybdopterin synthase complex, a complex that catalyzes the conversion of precursor Z into molybdopterin. Acts by mediating the incorporation of 2 sulfur atoms from thiocarboxylated Mocs2A into precursor Z to generate a dithiolene group. This Drosophila mojavensis (Fruit fly) protein is Molybdopterin synthase catalytic subunit.